The chain runs to 108 residues: Thiosulfate sulfurtransferase GlpE (108 aa).

One can recognise a Rhodanese domain in the interval 18–106 (ENEGATLADI…WERSGLPIET (89 aa)). The Cysteine persulfide intermediate role is filled by Cys66.

This sequence belongs to the GlpE family.

The protein resides in the cytoplasm. It carries out the reaction thiosulfate + hydrogen cyanide = thiocyanate + sulfite + 2 H(+). The catalysed reaction is thiosulfate + [thioredoxin]-dithiol = [thioredoxin]-disulfide + hydrogen sulfide + sulfite + 2 H(+). Transferase that catalyzes the transfer of sulfur from thiosulfate to thiophilic acceptors such as cyanide or dithiols. May function in a CysM-independent thiosulfate assimilation pathway by catalyzing the conversion of thiosulfate to sulfite, which can then be used for L-cysteine biosynthesis. This Actinobacillus pleuropneumoniae serotype 7 (strain AP76) protein is Thiosulfate sulfurtransferase GlpE.